The primary structure comprises 859 residues: Leucine--tRNA ligase (859 aa).

The short motif at 42–52 (PYPSGRLHMGH) is the 'HIGH' region element. Residues 618–622 (KMSKS) carry the 'KMSKS' region motif. Position 621 (K621) interacts with ATP.

It belongs to the class-I aminoacyl-tRNA synthetase family.

Its subcellular location is the cytoplasm. The catalysed reaction is tRNA(Leu) + L-leucine + ATP = L-leucyl-tRNA(Leu) + AMP + diphosphate. This is Leucine--tRNA ligase from Shewanella woodyi (strain ATCC 51908 / MS32).